A 335-amino-acid chain; its full sequence is Ketol-acid reductoisomerase (NADP(+)) (335 aa).

Residues M1–T182 form the KARI N-terminal Rossmann domain. NADP(+) contacts are provided by residues Y25–Q28, R48, S51, S53, and D83–Q86. Residue H108 is part of the active site. G134 provides a ligand contact to NADP(+). Residues T183–L328 form the KARI C-terminal knotted domain. 4 residues coordinate Mg(2+): D191, E195, E227, and E231. S252 contacts substrate.

It belongs to the ketol-acid reductoisomerase family. It depends on Mg(2+) as a cofactor.

It catalyses the reaction (2R)-2,3-dihydroxy-3-methylbutanoate + NADP(+) = (2S)-2-acetolactate + NADPH + H(+). The enzyme catalyses (2R,3R)-2,3-dihydroxy-3-methylpentanoate + NADP(+) = (S)-2-ethyl-2-hydroxy-3-oxobutanoate + NADPH + H(+). It functions in the pathway amino-acid biosynthesis; L-isoleucine biosynthesis; L-isoleucine from 2-oxobutanoate: step 2/4. Its pathway is amino-acid biosynthesis; L-valine biosynthesis; L-valine from pyruvate: step 2/4. Functionally, involved in the biosynthesis of branched-chain amino acids (BCAA). Catalyzes an alkyl-migration followed by a ketol-acid reduction of (S)-2-acetolactate (S2AL) to yield (R)-2,3-dihydroxy-isovalerate. In the isomerase reaction, S2AL is rearranged via a Mg-dependent methyl migration to produce 3-hydroxy-3-methyl-2-ketobutyrate (HMKB). In the reductase reaction, this 2-ketoacid undergoes a metal-dependent reduction by NADPH to yield (R)-2,3-dihydroxy-isovalerate. This Methanosarcina mazei (strain ATCC BAA-159 / DSM 3647 / Goe1 / Go1 / JCM 11833 / OCM 88) (Methanosarcina frisia) protein is Ketol-acid reductoisomerase (NADP(+)).